The sequence spans 514 residues: 2,3-bisphosphoglycerate-independent phosphoglycerate mutase (514 aa).

Mn(2+) is bound by residues Asp-13 and Ser-63. Catalysis depends on Ser-63, which acts as the Phosphoserine intermediate. Residues His-124, 154-155, Arg-186, Arg-192, 258-261, and Lys-332 each bind substrate; these read RD and RADR. Residues Asp-399, His-403, Asp-440, His-441, and His-459 each coordinate Mn(2+).

It belongs to the BPG-independent phosphoglycerate mutase family. Monomer. The cofactor is Mn(2+).

It catalyses the reaction (2R)-2-phosphoglycerate = (2R)-3-phosphoglycerate. It participates in carbohydrate degradation; glycolysis; pyruvate from D-glyceraldehyde 3-phosphate: step 3/5. In terms of biological role, catalyzes the interconversion of 2-phosphoglycerate and 3-phosphoglycerate. This is 2,3-bisphosphoglycerate-independent phosphoglycerate mutase from Legionella pneumophila (strain Paris).